A 73-amino-acid chain; its full sequence is uncharacterized protein (73 aa).

An N-terminal signal peptide occupies residues 1-23; the sequence is MLHLIKMVSKIVLLITLVFIVSA.

This is an uncharacterized protein from Acheta domesticus (House cricket).